The following is a 524-amino-acid chain: Cytochrome P450 CYP749A22 (524 aa).

The chain crosses the membrane as a helical span at residues 12 to 32; it reads TPILFQFLLSSLCVFLLFVFI. C472 lines the heme pocket.

Belongs to the cytochrome P450 family. Requires heme as cofactor.

The protein resides in the membrane. Functionally, probable heme-thiolate monooxygenase. This Panax ginseng (Korean ginseng) protein is Cytochrome P450 CYP749A22.